Here is a 653-residue protein sequence, read N- to C-terminus: Sodium-dependent phosphate transporter 2 (653 aa).

Residues 1-5 (MAIDG) lie on the Extracellular side of the membrane. A helical transmembrane segment spans residues 6-26 (YLWMVILGFIIAFILAFSVGA). Topologically, residues 27 to 46 (NDVANSFGTAVGSGVVTLRQ) are cytoplasmic. A helical transmembrane segment spans residues 47–67 (ACILASIFETTGSVLLGAKVG). Residues 68–86 (ETIRKGIIDVNLYNETVET) lie on the Extracellular side of the membrane. The N-linked (GlcNAc...) asparagine glycan is linked to Asn-81. A helical transmembrane segment spans residues 87 to 107 (LMAGEVSAMVGSAVWQLIASF). Topologically, residues 108–109 (LR) are cytoplasmic. The chain crosses the membrane as a helical span at residues 110-130 (LPISGTHCIVGSTIGFSLVAI). The Extracellular segment spans residues 131–142 (GTQGVQWMELVK). A helical transmembrane segment spans residues 143-163 (IVASWFISPLLSGFMSGVLFI). The Cytoplasmic portion of the chain corresponds to 164–190 (LIRIFILKKEDPVPNGLRALPVFYAAT). A helical membrane pass occupies residues 191–211 (IAINVFSIMYTGAPVLGLVLP). Over 212 to 213 (IW) the chain is Extracellular. A helical transmembrane segment spans residues 214–234 (AIALISFGVALLFALFVWLFV). The Cytoplasmic portion of the chain corresponds to 235 to 483 (CPWMRRKIAG…EEKEEKDTAE (249 aa)). Residues Ser-253, Ser-256, Ser-259, and Ser-268 each carry the phosphoserine modification. The interval 275–311 (PGAKANDDSTVPLTGSAGEPSGTSEGTSVGNHPRASY) is disordered. The segment covering 295–304 (SGTSEGTSVG) has biased composition (polar residues). Ser-316 and Ser-385 each carry phosphoserine. The tract at residues 459-478 (SELTDPDQPRDDPAEEEKEE) is disordered. The chain crosses the membrane as a helical span at residues 484–504 (VHLLFHFLQVLTACFGSFAHG). The Extracellular portion of the chain corresponds to 505 to 531 (GNDVSNAIGPLVALWLIYEQGAVLQEA). The helical transmembrane segment at 532-552 (VTPVWLLFYGGVGICTGLWVW) threads the bilayer. The Cytoplasmic segment spans residues 553-572 (GRRVIQTMGKDLTPITPSSG). The chain crosses the membrane as a helical span at residues 573–587 (FTIELASAFTVVIAS). The Extracellular portion of the chain corresponds to 588 to 594 (NVGLPVS). Residues 595–610 (TTHCKVGSVVAVGWIR) form a helical membrane-spanning segment. Topologically, residues 611–622 (SRKAVDWRLFRN) are cytoplasmic. The helical transmembrane segment at 623–643 (IFVAWFVTVPVAGLFSAAIMA) threads the bilayer. The Extracellular segment spans residues 644-653 (LLMYGILPYV).

It belongs to the inorganic phosphate transporter (PiT) (TC 2.A.20) family. Homodimer.

It is found in the cell membrane. It localises to the apical cell membrane. The catalysed reaction is 2 Na(+)(out) + phosphate(out) = 2 Na(+)(in) + phosphate(in). Functionally, sodium-phosphate symporter which preferentially transports the monovalent form of phosphate with a stoichiometry of two sodium ions per phosphate ion. Plays a critical role in the determination of bone quality and strength by providing phosphate for bone mineralization. Required to maintain normal cerebrospinal fluid phosphate levels. Mediates phosphate-induced calcification of vascular smooth muscle cells (VCMCs) and can functionally compensate for loss of SLC20A1 in VCMCs. In terms of biological role, (Microbial infection) Functions as a retroviral receptor for feline leukemia virus subgroup B (FeLV-B). The polypeptide is Sodium-dependent phosphate transporter 2 (SLC20A2) (Felis catus (Cat)).